A 527-amino-acid chain; its full sequence is MENDHSSSDEHEHENPELQTRAPKRRRLSETSEDDEYVAAPTPLPTLSRIKKKEPKDENKDTSTGTDNPVLIKDALEMGLQDAGESSFKALNVAPWLIGSLTTMAVRKPTAIQRACIPEILKGRDCIGGSRTGSGKTIAFAVPILQKWAEDPFGIFAVVLTPTRELALQIYEQFKAISAPQSMKPVLITGGTDMRPQALALSQRPHVVIATPGRLADHIQTSGEDTVRGLKRVRMVVLDEADRLLAPGPGSMLPDVETCLSALPPSSERQTLLFTATVTPEVRALKSMPRASTKPPVFVTEIEAGGTTSAGADGAAPKSTLPPTLKQTYLKVPMTHREAFLHVLLSTDGNAGKPAIIFCNHTKTADLLERLLRRLAHRVTSLHSLLPQSERSSNLARFRASAARILVATDVASRGLDIPSVALVVNYDVPRNPDDYVHRVGRTARAGRRGEAVTLVGQRDVQLVLAIEERVGRQMEEWSEEGVSVEGRVVRTGVLKEVGSAKREALIEIEEGRDVLGRKRNKLKKVR.

Basic and acidic residues predominate over residues 1–16; sequence MENDHSSSDEHEHENP. The segment at 1–70 is disordered; that stretch reads MENDHSSSDE…DTSTGTDNPV (70 aa). The short motif at 86–114 is the Q motif element; that stretch reads SSFKALNVAPWLIGSLTTMAVRKPTAIQR. One can recognise a Helicase ATP-binding domain in the interval 117 to 296; it reads IPEILKGRDC…SMPRASTKPP (180 aa). 130–137 lines the ATP pocket; it reads SRTGSGKT. Positions 239 to 242 match the DEAD box motif; it reads DEAD. The 163-residue stretch at 324 to 486 folds into the Helicase C-terminal domain; that stretch reads TLKQTYLKVP…EWSEEGVSVE (163 aa).

It belongs to the DEAD box helicase family. DDX49/DBP8 subfamily.

It localises to the nucleus. The protein localises to the nucleolus. The catalysed reaction is ATP + H2O = ADP + phosphate + H(+). In terms of biological role, ATP-binding RNA helicase involved in 40S ribosomal subunit biogenesis and is required for the normal formation of 18S rRNAs through pre-rRNA processing at A0, A1 and A2 sites. Required for vegetative growth. The protein is ATP-dependent RNA helicase dbp8 (dbp8) of Aspergillus terreus (strain NIH 2624 / FGSC A1156).